The chain runs to 640 residues: GATA zinc finger domain-containing protein 12 (640 aa).

Disordered regions lie at residues 121–209 and 355–390; these read SNNI…NIPI and QQIR…HINN. Low complexity-rich tracts occupy residues 122 to 209 and 355 to 379; these read NNIP…NIPI and QQIR…QHQQ. The span at 380 to 390 shows a compositional bias: polar residues; sequence PPTNIPQHINN. A GATA-type zinc finger spans residues 506 to 531; it reads CVNCKTSDTPEWRRGPQGAKTLCNAC.

In Dictyostelium discoideum (Social amoeba), this protein is GATA zinc finger domain-containing protein 12 (gtaL).